The primary structure comprises 183 residues: Disulfide bond formation protein B 2 (183 aa).

Residues 1–9 lie on the Cytoplasmic side of the membrane; that stretch reads MSLACSRSL. Residues 10–26 traverse the membrane as a helical segment; that stretch reads FFMAFTAGILALGASYY. At 27-44 the chain is on the periplasmic side; the sequence is LEYAVGLVPCSLCLVQRL. Cys36 and Cys39 form a disulfide bridge. Residues 45-61 traverse the membrane as a helical segment; the sequence is FMSVLTLCCGLAAVHGP. Topologically, residues 62-68 are cytoplasmic; it reads QRVGLSL. The helical transmembrane segment at 69-85 threads the bilayer; that stretch reads YWMVTLLSSLGGTTAAW. Over 86 to 142 the chain is Periplasmic; that stretch reads RQVLFQSDSLQELAHCAPNPEEMFSSLPWLCALMRMFNDTADCAELSWTLFDLSIPE. Cysteines 101 and 128 form a disulfide. Residues 143–161 form a helical membrane-spanning segment; the sequence is WSLLFFVGMSILAVYQLLR. Topologically, residues 162-183 are cytoplasmic; that stretch reads QVWMALQRPLSGQPSHPALVRD.

Belongs to the DsbB family.

The protein localises to the cell inner membrane. In terms of biological role, required for disulfide bond formation in some periplasmic proteins. Acts by oxidizing the DsbA protein. In Pseudomonas fluorescens (strain Pf0-1), this protein is Disulfide bond formation protein B 2.